The following is a 1978-amino-acid chain: Dedicator of cytokinesis protein 4 (1978 aa).

In terms of domain architecture, SH3 spans 6–67 (EHEKYGVVIA…PSSYVHLKNA (62 aa)). Phosphotyrosine is present on Tyr167. Position 193 is a phosphothreonine (Thr193). One can recognise a C2 DOCK-type domain in the interval 401-574 (RNDLYITVER…ESFWITSFLC (174 aa)). The region spanning 1199–1605 (KTELNKEEMY…FGIQEFPACI (407 aa)) is the DOCKER domain. A phosphoserine mark is found at Ser1608, Ser1616, Ser1623, Ser1627, Ser1629, and Ser1640. 2 disordered regions span residues 1657 to 1738 (SQAS…IYPT) and 1751 to 1978 (IGDG…VSQL). Low complexity predominate over residues 1681–1712 (PSPSTSSLSSTHSASPNVTSSAPSSARASPLL). Phosphoserine is present on Ser1778. Residues 1797–1803 (PPVPPRP) carry the SH3-binding motif. The span at 1804-1818 (TQTASPARHTTSVSP) shows a compositional bias: polar residues. Residues 1842 to 1872 (SPGLSSNSPVLSGSYSSGISSLSRCSTSETS) show a composition bias toward low complexity. The segment covering 1873 to 1882 (GFENQANEQS) has biased composition (polar residues). Residues 1885–1895 (VPVPVPVPVPV) are compositionally biased toward pro residues. Residues 1953–1966 (SHLENGTRRTEPGP) are compositionally biased toward basic and acidic residues.

Belongs to the DOCK family. In terms of assembly, interacts with nucleotide-free Rap1; functions as a guanine nucleotide exchange factor (GEF) for Rap1. Interacts (via DOCKER domain) with RAC1; functions as a guanine nucleotide exchange factor (GEF) for RAC1. Interacts with the SH3 domain of CRK. Interacts with FASLG. Interacts with ELMO2 and EPHA2; mediates activation of RAC1 by EPHA2. Interacts with USH1C (via PDZ 1 domain). As to expression, expressed in inner ear (at protein level).

Its subcellular location is the cell membrane. It is found in the cytoplasm. The protein localises to the cytosol. Functionally, functions as a guanine nucleotide exchange factor (GEF) that promotes the exchange of GDP to GTP, converting inactive GDP-bound small GTPases into their active GTP-bound form. Involved in regulation of adherens junction between cells. Plays a role in cell migration. Has a higher guanine nucleotide exchange factor activity compared to other isoforms. The protein is Dedicator of cytokinesis protein 4 (Dock4) of Mus musculus (Mouse).